The primary structure comprises 207 residues: Ras-related protein Rab-8A (207 aa).

GTP contacts are provided by S17, G18, V19, G20, K21, T22, C23, S39, and T40. T22 contacts Mg(2+). Short sequence motifs (switch) lie at residues 31-45 and 63-80; these read DAFNATFISTIGIDF and DTAGQERFRTITTAYYRG. The Mg(2+) site is built by T40 and D63. GTP is bound by residues G66, N121, K122, D124, A152, and K153. At C204 the chain carries Cysteine methyl ester. The S-geranylgeranyl cysteine moiety is linked to residue C204. A propeptide spans 205–207 (removed in mature form); the sequence is VLL.

The protein belongs to the small GTPase superfamily. Rab family. Requires Mg(2+) as cofactor.

The protein resides in the cell membrane. Its subcellular location is the golgi apparatus. The protein localises to the endosome membrane. It is found in the recycling endosome membrane. It localises to the cell projection. The protein resides in the cilium. Its subcellular location is the cytoplasmic vesicle. The protein localises to the phagosome membrane. It is found in the cytoplasm. It localises to the cytoskeleton. The protein resides in the microtubule organizing center. Its subcellular location is the centrosome. The protein localises to the centriole. It is found in the cilium basal body. It localises to the midbody. The catalysed reaction is GTP + H2O = GDP + phosphate + H(+). With respect to regulation, regulated by guanine nucleotide exchange factors (GEFs) which promote the exchange of bound GDP for free GTP, GTPase activating proteins (GAPs) which increase the GTP hydrolysis activity, and GDP dissociation inhibitors (GDIs) which inhibit the dissociation of the nucleotide from the GTPase. Activated in response to insulin. Functionally, the small GTPases Rab are key regulators of intracellular membrane trafficking, from the formation of transport vesicles to their fusion with membranes. Rabs cycle between an inactive GDP-bound form and an active GTP-bound form that is able to recruit to membranes different sets of downstream effectors directly responsible for vesicle formation, movement, tethering and fusion. RAB8A is involved in polarized vesicular trafficking and neurotransmitter release. Together with RAB11A, RAB3IP, the exocyst complex, PARD3, PRKCI, ANXA2, CDC42 and DNMBP promotes transcytosis of PODXL to the apical membrane initiation sites (AMIS), apical surface formation and lumenogenesis. Regulates the compacted morphology of the Golgi. Together with MYO5B and RAB11A participates in epithelial cell polarization. Also involved in membrane trafficking to the cilium and ciliogenesis. Together with MICALL2, may also regulate adherens junction assembly. May play a role in insulin-induced transport to the plasma membrane of the glucose transporter GLUT4 and therefore play a role in glucose homeostasis. Involved in autophagy. Participates in the export of a subset of neosynthesized proteins through a Rab8-Rab10-Rab11-dependent endososomal export route. Targeted to and stabilized on stressed lysosomes through LRRK2 phosphorylation. Suppresses stress-induced lysosomal enlargement through EHBP1 and EHNP1L1 effector proteins. The sequence is that of Ras-related protein Rab-8A (RAB8A) from Gallus gallus (Chicken).